Here is a 582-residue protein sequence, read N- to C-terminus: Hydrogen peroxide stress regulator 1 (582 aa).

4 disordered regions span residues 24 to 55 (SPFA…HNSS), 107 to 154 (YPSA…GISK), 347 to 366 (TSYN…SGET), and 375 to 422 (NTSG…GGKS). A compositionally biased stretch (polar residues) spans 107-125 (YPSASFSTSQHPSQVYNDG). Over residues 126-143 (STLNSNNTTQQLNNNNGF) the composition is skewed to low complexity. Residues 375 to 392 (NTSGRSPNSMEATEQIGT) are compositionally biased toward polar residues. Residues 423 to 446 (FVCPECSKKFKRSEHLRRHIRSLH) form a C2H2-type 1 zinc finger. The C2H2-type 2; atypical zinc finger occupies 452-473 (FVCICGKRFSRRDNLRQHERLH).

Its subcellular location is the nucleus. Functionally, transcription factor that globally supports gene expression in response to hydrogen peroxide. This Schizosaccharomyces pombe (strain 972 / ATCC 24843) (Fission yeast) protein is Hydrogen peroxide stress regulator 1 (hsr1).